A 366-amino-acid polypeptide reads, in one-letter code: Chorismate synthase (366 aa).

2 residues coordinate NADP(+): Arg48 and Arg54. FMN contacts are provided by residues 132-134 (RSS), 244-245 (NA), Gly289, 304-308 (KPTSS), and Arg330.

The protein belongs to the chorismate synthase family. As to quaternary structure, homotetramer. Requires FMNH2 as cofactor.

It catalyses the reaction 5-O-(1-carboxyvinyl)-3-phosphoshikimate = chorismate + phosphate. The protein operates within metabolic intermediate biosynthesis; chorismate biosynthesis; chorismate from D-erythrose 4-phosphate and phosphoenolpyruvate: step 7/7. Functionally, catalyzes the anti-1,4-elimination of the C-3 phosphate and the C-6 proR hydrogen from 5-enolpyruvylshikimate-3-phosphate (EPSP) to yield chorismate, which is the branch point compound that serves as the starting substrate for the three terminal pathways of aromatic amino acid biosynthesis. This reaction introduces a second double bond into the aromatic ring system. This chain is Chorismate synthase, found in Methylobacterium radiotolerans (strain ATCC 27329 / DSM 1819 / JCM 2831 / NBRC 15690 / NCIMB 10815 / 0-1).